The chain runs to 321 residues: Olfactory receptor 3A3 (321 aa).

Topologically, residues 1-34 are extracellular; it reads MSLQKLMEPEAGTNRTAVAEFILLGLVQTEEMQP. Residue N14 is glycosylated (N-linked (GlcNAc...) asparagine). A helical transmembrane segment spans residues 35-58; it reads VVFVLLLFAYLVTTGGNLSILAAV. At 59 to 66 the chain is on the cytoplasmic side; the sequence is LVEPKLHA. A helical transmembrane segment spans residues 67 to 88; that stretch reads PMYFFLGNLSVLDVGCITVTVP. Topologically, residues 89-109 are extracellular; it reads AMLGRLLSHKSTISYDACLSQ. C106 and C198 are joined by a disulfide. Residues 110–129 form a helical membrane-spanning segment; it reads LFFFHLLAGMDCFLLTAMAY. The Cytoplasmic segment spans residues 130–149; that stretch reads DRLLAICQPLTYSTRMSQTV. A helical transmembrane segment spans residues 150-167; sequence QRMLVAASWACAFTNALT. Topologically, residues 168-205 are extracellular; sequence HTVAMSTLNFCGPNEVNHFYCDLPQLFQLSCSSTQLNE. The helical transmembrane segment at 206–228 threads the bilayer; that stretch reads LLLFVAAAFMAVAPLVFISVSYA. Residues 229–245 are Cytoplasmic-facing; that stretch reads HVVAAVLQIRSAEGRKK. A helical membrane pass occupies residues 246-268; that stretch reads AFSTCGSHLTVVGIFYGTGVFSY. At 269 to 281 the chain is on the extracellular side; that stretch reads MRLGSVESSDKDK. A helical membrane pass occupies residues 282–301; the sequence is GVGVFMTVINPMLNPLIYSL. At 302–321 the chain is on the cytoplasmic side; sequence RNTDVQGALCQLLVGKRSLT.

This sequence belongs to the G-protein coupled receptor 1 family.

It is found in the cell membrane. In terms of biological role, odorant receptor. This Homo sapiens (Human) protein is Olfactory receptor 3A3 (OR3A3).